The following is a 321-amino-acid chain: Cytochrome c biogenesis protein CcsA (321 aa).

7 helical membrane-spanning segments follow: residues 9-29, 44-64, 68-88, 143-163, 226-246, 260-274, and 289-309; these read ILTH…LITL, GMIA…ASSG, LSNL…LHMI, MLLS…LLMI, VISL…VWAN, TWAF…IYLH, and VASI…LLGI.

The protein belongs to the CcmF/CycK/Ccl1/NrfE/CcsA family. May interact with Ccs1.

The protein localises to the plastid. Its subcellular location is the chloroplast thylakoid membrane. Required during biogenesis of c-type cytochromes (cytochrome c6 and cytochrome f) at the step of heme attachment. The chain is Cytochrome c biogenesis protein CcsA from Oryza sativa (Rice).